The following is a 509-amino-acid chain: Maturase K (509 aa).

Belongs to the intron maturase 2 family. MatK subfamily.

Its subcellular location is the plastid. It is found in the chloroplast. In terms of biological role, usually encoded in the trnK tRNA gene intron. Probably assists in splicing its own and other chloroplast group II introns. This Chamaecyparis obtusa (Hinoki false-cypress) protein is Maturase K.